We begin with the raw amino-acid sequence, 204 residues long: E3 ubiquitin-protein ligase MPSR1 (204 aa).

An RING-type; atypical zinc finger spans residues 113-154 (CVICLEEWKSEETVKEMPCKHRFHGGCIEKWLGFHGSCPVCR).

Post-translationally, autoubiquitinated.

It localises to the cytoplasm. The enzyme catalyses S-ubiquitinyl-[E2 ubiquitin-conjugating enzyme]-L-cysteine + [acceptor protein]-L-lysine = [E2 ubiquitin-conjugating enzyme]-L-cysteine + N(6)-ubiquitinyl-[acceptor protein]-L-lysine.. In terms of biological role, E3 ubiquitin-protein ligase involved in protein quality control (PQC) under proteotoxic stress. Is essential to plant survival under proteotoxic stress. Functions by removing damaged proteins before they form cytotoxic aggregates. Recognizes misfolded proteins selectively and tethers polyubiquitin chains to the proteins directly for subsequent degradation by the 26S proteasome pathway. Targets misfolded proteins independently of cytoplasmic chaperones. Associates with the 26S proteasome and sustains the structural integrity of the proteasome complex at the initial stage of proteotoxic stress. Under normal conditions, MPSR1 becomes highly unstable by its autoubiquitination activity and is stabilized during proteotoxic stress by conjugating ubiquitins on misfolded proteins. The chain is E3 ubiquitin-protein ligase MPSR1 from Arabidopsis thaliana (Mouse-ear cress).